A 330-amino-acid polypeptide reads, in one-letter code: Clp protease adapter protein ClpF, chloroplastic (330 aa).

The N-terminal 65 residues, 1–65 (MVQSQSLSTL…KSLKQRNLLR (65 aa)), are a transit peptide targeting the chloroplast. The tract at residues 66 to 138 (VEARWPFQGG…VEEESIRLQE (73 aa)) is NTD, required for CLPS1-binding. Coiled coils occupy residues 112–139 (NLEQYDIAQQLREKLTEVEEESIRLQEG) and 175–195 (AAKLRDEISKLEAESLAVSAK). In terms of domain architecture, UVR spans 153–188 (GISIIRLRADLQNAIDSEDYGLAAKLRDEISKLEAE). A yccV-like region spans residues 203–310 (EYAFRLGQKL…TAGDFIPVKQ (108 aa)).

Binds to CLPC1 and CLPC2. Interacts with ClpS1; this interaction stimulates their association with ClpC. Associates with the Clp substrate HEMA1 (GluTR). As to expression, expressed constitutively in photosynthetic tissues such as leaves, stems and flowers, and, at low levels, in siliques.

It is found in the plastid. The protein resides in the chloroplast. Its function is as follows. Clp protease adapter that facilitates CLPS1 recruitment to ClpC chaperones thus forming a binary adapter for selective substrate recognition and delivery to plastid Clp protease system (CLPC). The polypeptide is Clp protease adapter protein ClpF, chloroplastic (Arabidopsis thaliana (Mouse-ear cress)).